The chain runs to 314 residues: Three-prime repair exonuclease 1 (314 aa).

Mg(2+) contacts are provided by D18 and E20. 20–21 (EA) provides a ligand contact to substrate. S78 carries the phosphoserine modification. Y129 contacts substrate. A Phosphoserine modification is found at S167. H195 (proton donor/acceptor) is an active-site residue. Mg(2+) is bound at residue D200. Substrate is bound at residue D200. The tract at residues 236-314 (TASARTKPRP…YGLSLATPGE (79 aa)) is necessary for endoplasmic reticulum localization. Positions 240–278 (RTKPRPSAVTTTAHLATTRNTSPSLGESRGTKDLPPVKD) are disordered. The interaction with UBQLN1 stretch occupies residues 243–314 (PRPSAVTTTA…YGLSLATPGE (72 aa)). Residues 247–260 (AVTTTAHLATTRNT) show a composition bias toward low complexity. S261 is subject to Phosphoserine. Residues 281–314 (ALSREGLLAPLGLLAILTLAVATLYGLSLATPGE) form a necessary for cytoplasmic retention region.

It belongs to the exonuclease superfamily. TREX family. Homodimer. Interacts (via proline-rich region) with TCERG1/CA150 (via the second WW domain). Component of the SET complex, composed of at least ANP32A, APEX1, HMGB2, NME1, SET and TREX1. Within this complex, directly interacts with SET; this interaction does not result in TREX1 inhibition. Also interacts with NME1, but only following translocation to the nucleus. Directly interacts with UBQLN1 (via ubiquitin-like domain); the interaction may control TREX1 subcellular location. It depends on Mg(2+) as a cofactor. Ubiquitinated, but not targeted to proteasomal degradation. Ubiquitination may be important for interaction with UBQLN1. Detected in thymus, spleen, liver, brain, heart, small intestine and colon.

It is found in the nucleus. The protein resides in the cytoplasm. The protein localises to the cytosol. Its subcellular location is the endoplasmic reticulum membrane. The catalysed reaction is Exonucleolytic cleavage in the 3'- to 5'-direction to yield nucleoside 5'-phosphates.. Its function is as follows. Major cellular 3'-to-5' DNA exonuclease which digests single-stranded DNA (ssDNA) and double-stranded DNA (dsDNA) with mismatched 3' termini. Prevents cell-intrinsic initiation of autoimmunity. Acts by metabolizing DNA fragments from endogenous retroelements, including L1, LTR and SINE elements. Plays a key role in degradation of DNA fragments at cytosolic micronuclei arising from genome instability: its association with the endoplasmic reticulum membrane directs TREX1 to ruptured micronuclei, leading to micronuclear DNA degradation. Micronuclear DNA degradation is required to limit CGAS activation and subsequent inflammation. Unless degraded, these DNA fragments accumulate in the cytosol and activate the cGAS-STING innate immune signaling, leading to the production of type I interferon. Prevents chronic ATM-dependent checkpoint activation, by processing ssDNA polynucleotide species arising from the processing of aberrant DNA replication intermediates. Inefficiently degrades oxidized DNA, such as that generated upon antimicrobial reactive oxygen production or upon absorption of UV light. During GZMA-mediated cell death, contributes to DNA damage in concert with NME1. NME1 nicks one strand of DNA and TREX1 removes bases from the free 3' end to enhance DNA damage and prevent DNA end reannealing and rapid repair. This chain is Three-prime repair exonuclease 1, found in Homo sapiens (Human).